Consider the following 180-residue polypeptide: Acireductone dioxygenase (180 aa).

The Fe(2+) site is built by His97, His99, Glu103, and His141. Ni(2+) contacts are provided by His97, His99, Glu103, and His141.

The protein belongs to the acireductone dioxygenase (ARD) family. Monomer. Requires Fe(2+) as cofactor. Ni(2+) is required as a cofactor.

It carries out the reaction 1,2-dihydroxy-5-(methylsulfanyl)pent-1-en-3-one + O2 = 3-(methylsulfanyl)propanoate + CO + formate + 2 H(+). It catalyses the reaction 1,2-dihydroxy-5-(methylsulfanyl)pent-1-en-3-one + O2 = 4-methylsulfanyl-2-oxobutanoate + formate + 2 H(+). It functions in the pathway amino-acid biosynthesis; L-methionine biosynthesis via salvage pathway; L-methionine from S-methyl-5-thio-alpha-D-ribose 1-phosphate: step 5/6. Functionally, catalyzes 2 different reactions between oxygen and the acireductone 1,2-dihydroxy-3-keto-5-methylthiopentene (DHK-MTPene) depending upon the metal bound in the active site. Fe-containing acireductone dioxygenase (Fe-ARD) produces formate and 2-keto-4-methylthiobutyrate (KMTB), the alpha-ketoacid precursor of methionine in the methionine recycle pathway. Ni-containing acireductone dioxygenase (Ni-ARD) produces methylthiopropionate, carbon monoxide and formate, and does not lie on the methionine recycle pathway. This Acidiphilium cryptum (strain JF-5) protein is Acireductone dioxygenase.